Reading from the N-terminus, the 362-residue chain is Large ribosomal subunit protein uL4A (362 aa).

An N-acetylserine modification is found at Ser2. Omega-N-methylarginine is present on Arg95. Residues Pro277–Asp362 form a C-terminal-extended nuclear localization signal region.

The protein belongs to the universal ribosomal protein uL4 family. As to quaternary structure, component of the large ribosomal subunit (LSU). Mature yeast ribosomes consist of a small (40S) and a large (60S) subunit. The 40S small subunit contains 1 molecule of ribosomal RNA (18S rRNA) and 33 different proteins (encoded by 57 genes). The large 60S subunit contains 3 rRNA molecules (25S, 5.8S and 5S rRNA) and 46 different proteins (encoded by 81 genes). uL4 is associated with the polypeptide exit tunnel. uL4 interacts with its chaperone ACL4 and the nuclear import receptor KAP104. In terms of processing, N-terminally acetylated by acetyltransferase NatA.

Its subcellular location is the cytoplasm. It is found in the nucleus. Functionally, component of the ribosome, a large ribonucleoprotein complex responsible for the synthesis of proteins in the cell. The small ribosomal subunit (SSU) binds messenger RNAs (mRNAs) and translates the encoded message by selecting cognate aminoacyl-transfer RNA (tRNA) molecules. The large subunit (LSU) contains the ribosomal catalytic site termed the peptidyl transferase center (PTC), which catalyzes the formation of peptide bonds, thereby polymerizing the amino acids delivered by tRNAs into a polypeptide chain. The nascent polypeptides leave the ribosome through a tunnel in the LSU and interact with protein factors that function in enzymatic processing, targeting, and the membrane insertion of nascent chains at the exit of the ribosomal tunnel. uL4 participates in the regulation of the accumulation of its own mRNA. The protein is Large ribosomal subunit protein uL4A of Saccharomyces cerevisiae (strain ATCC 204508 / S288c) (Baker's yeast).